A 114-amino-acid polypeptide reads, in one-letter code: uncharacterized protein (114 aa).

The HIT domain maps to 6–114 (IFGKIIRREI…GGRSLAWPPG (109 aa)). The Histidine triad motif motif lies at 98 to 102 (HLHIH).

This is an uncharacterized protein from Synechococcus elongatus (strain ATCC 33912 / PCC 7942 / FACHB-805) (Anacystis nidulans R2).